A 428-amino-acid chain; its full sequence is D-alanine--D-alanine ligase (428 aa).

An ATP-grasp domain is found at 205 to 424; it reads KVVLDAAGIP…YTELITRLIE (220 aa). 237–299 is an ATP binding site; the sequence is DAGLTYPLFV…EQGIDGREIE (63 aa). Residues D378, E391, and N393 each contribute to the Mg(2+) site.

The protein belongs to the D-alanine--D-alanine ligase family. It depends on Mg(2+) as a cofactor. The cofactor is Mn(2+).

It is found in the cytoplasm. It catalyses the reaction 2 D-alanine + ATP = D-alanyl-D-alanine + ADP + phosphate + H(+). It functions in the pathway cell wall biogenesis; peptidoglycan biosynthesis. Cell wall formation. This chain is D-alanine--D-alanine ligase, found in Bifidobacterium longum (strain NCC 2705).